Reading from the N-terminus, the 123-residue chain is Protein Wnt-3a (123 aa).

A lipid anchor (O-palmitoleoyl serine) is attached at Ser1. A disulfide bridge connects residues Cys89 and Cys104. N-linked (GlcNAc...) asparagine glycosylation occurs at Asn90.

The protein belongs to the Wnt family. In terms of processing, disulfide bonds have critical and distinct roles in secretion and activity. Loss of each conserved cysteine results in high molecular weight oxidized Wnt oligomers, which are formed through inter-Wnt disulfide bonding. Palmitoleoylation is required for efficient binding to frizzled receptors. Depalmitoleoylation leads to Wnt signaling pathway inhibition.

The protein resides in the secreted. It is found in the extracellular space. It localises to the extracellular matrix. Functionally, ligand for members of the frizzled family of seven transmembrane receptors. Functions in the canonical Wnt signaling pathway that results in activation of transcription factors of the TCF/LEF family. Required for normal embryonic mesoderm development and formation of caudal somites. Required for normal morphogenesis of the developing neural tube. This Alopias vulpinus (Common thresher shark) protein is Protein Wnt-3a (WNT-3A).